Here is a 240-residue protein sequence, read N- to C-terminus: ATP synthase subunit a (240 aa).

5 helical membrane passes run 21–41 (LSNL…CVWG), 78–98 (IFLP…LIGV), 116–136 (DAVM…YYGI), 183–203 (ILLS…FGAA), and 212–232 (FSVF…MVYM).

It belongs to the ATPase A chain family. In terms of assembly, F-type ATPases have 2 components, CF(1) - the catalytic core - and CF(0) - the membrane proton channel. CF(1) has five subunits: alpha(3), beta(3), gamma(1), delta(1), epsilon(1). CF(0) has three main subunits: a(1), b(2) and c(9-12). The alpha and beta chains form an alternating ring which encloses part of the gamma chain. CF(1) is attached to CF(0) by a central stalk formed by the gamma and epsilon chains, while a peripheral stalk is formed by the delta and b chains.

The protein localises to the cell membrane. In terms of biological role, key component of the proton channel; it plays a direct role in the translocation of protons across the membrane. In Oceanobacillus iheyensis (strain DSM 14371 / CIP 107618 / JCM 11309 / KCTC 3954 / HTE831), this protein is ATP synthase subunit a.